The chain runs to 658 residues: Endoplasmic reticulum chaperone BiP (658 aa).

The N-terminal stretch at 1 to 19 (MVTMKLFALVLLVSASVFA) is a signal peptide. ATP-binding positions include 38-41 (GTTY), Lys-98, 228-230 (GGT), 294-301 (EKAKRALS), and 365-368 (GSTR). Residues 127-281 (KPYIEVDIGD…KKKTGKDVRA (155 aa)) are nucleotide-binding (NBD). Residues 410–420 (QDTGDLVLLDV) are interdomain linker. The segment at 421-501 (CPLTLGIETV…PRGVPQIEVT (81 aa)) is substrate-binding (SBD). The interval 634–658 (KLYGGAGAPPPEGAEGAEETEKDEL) is disordered. The span at 648–658 (EGAEETEKDEL) shows a compositional bias: acidic residues. The short motif at 655–658 (KDEL) is the Prevents secretion from ER element.

Belongs to the heat shock protein 70 family. As to quaternary structure, monomer and homooligomer; homooligomerization via the interdomain linker inactivates the chaperone activity and acts as a storage of hspa5/BiP molecules. Interacts with DNAJC10. Interacts with dnajb9/ERdj4; leading to recruit hspa5/BiP to ern1/ire1. Interacts with ern1/ire1; interaction takes place following interaction with dnajb9/ERdj4 and leads to inactivate ern1/IRE1.

It localises to the endoplasmic reticulum lumen. It carries out the reaction ATP + H2O = ADP + phosphate + H(+). The chaperone activity is regulated by ATP-induced allosteric coupling of the nucleotide-binding (NBD) and substrate-binding (SBD) domains. In the ADP-bound and nucleotide-free (apo) states, the two domains have little interaction. In contrast, in the ATP-bound state the two domains are tightly coupled, which results in drastically accelerated kinetics in both binding and release of polypeptide substrates. J domain-containing co-chaperones (dnajb9/ERdj4 or dnajc10/ERdj5) stimulate the ATPase activity and are required for efficient substrate recognition by hspa5/BiP. Homooligomerization inactivates participating hspa5/BiP protomers and probably act as reservoirs to store hspa5/BiP molecules when they are not needed by the cell. Functionally, endoplasmic reticulum chaperone that plays a key role in protein folding and quality control in the endoplasmic reticulum lumen. Involved in the correct folding of proteins and degradation of misfolded proteins via its interaction with dnajc10/ERdj5, probably to facilitate the release of dnajc10/ERdj5 from its substrate. Acts as a key repressor of the EIF2AK3/PERK and ERN1/IRE1-mediated unfolded protein response (UPR). In the unstressed endoplasmic reticulum, recruited by DNAJB9/ERdj4 to the luminal region of ERN1/IRE1, leading to disrupt the dimerization of ERN1/IRE1, thereby inactivating ERN1/IRE1. Also binds and inactivates EIF2AK3/PERK in unstressed cells. Accumulation of misfolded protein in the endoplasmic reticulum causes release of HSPA5/BiP from ERN1/IRE1 and EIF2AK3/PERK, allowing their homodimerization and subsequent activation. In Xenopus laevis (African clawed frog), this protein is Endoplasmic reticulum chaperone BiP.